An 88-amino-acid chain; its full sequence is Translation initiation factor IF-1 2 (88 aa).

Residues 1–72 (MAKEELIEMQ…TKGRITFRHL (72 aa)) enclose the S1-like domain.

This sequence belongs to the IF-1 family. As to quaternary structure, component of the 30S ribosomal translation pre-initiation complex which assembles on the 30S ribosome in the order IF-2 and IF-3, IF-1 and N-formylmethionyl-tRNA(fMet); mRNA recruitment can occur at any time during PIC assembly.

Its subcellular location is the cytoplasm. In terms of biological role, one of the essential components for the initiation of protein synthesis. Stabilizes the binding of IF-2 and IF-3 on the 30S subunit to which N-formylmethionyl-tRNA(fMet) subsequently binds. Helps modulate mRNA selection, yielding the 30S pre-initiation complex (PIC). Upon addition of the 50S ribosomal subunit IF-1, IF-2 and IF-3 are released leaving the mature 70S translation initiation complex. This Acidovorax sp. (strain JS42) protein is Translation initiation factor IF-1 2.